The sequence spans 407 residues: tRNA(Ile2) 2-agmatinylcytidine synthetase TiaS (407 aa).

This sequence belongs to the TiaS family.

The protein localises to the cytoplasm. The catalysed reaction is cytidine(34) in tRNA(Ile2) + agmatine + ATP + H2O = 2-agmatinylcytidine(34) in tRNA(Ile2) + AMP + 2 phosphate + 2 H(+). Functionally, ATP-dependent agmatine transferase that catalyzes the formation of 2-agmatinylcytidine (agm2C) at the wobble position (C34) of tRNA(Ile2), converting the codon specificity from AUG to AUA. This chain is tRNA(Ile2) 2-agmatinylcytidine synthetase TiaS, found in Caldivirga maquilingensis (strain ATCC 700844 / DSM 13496 / JCM 10307 / IC-167).